The chain runs to 89 residues: MQTVLIALLRFYKLAVSPLLGSRCRFYPSCSDYAREAIQYHGAARGTYLAARRLCRCHPFSAGGVDLVPPPNSDARNAPHEAEASSHRL.

The interval Val68–Leu89 is disordered. The segment covering Asn77–Leu89 has biased composition (basic and acidic residues).

The protein belongs to the UPF0161 family.

Its subcellular location is the cell inner membrane. Its function is as follows. Could be involved in insertion of integral membrane proteins into the membrane. In Burkholderia mallei (strain SAVP1), this protein is Putative membrane protein insertion efficiency factor.